The following is a 652-amino-acid chain: Acetyl-coenzyme A synthetase (652 aa).

Residues 191–194 (RAGN) and threonine 311 each bind CoA. ATP is bound by residues 387–389 (GEP), 411–416 (DTWWQT), aspartate 503, and arginine 518. A CoA-binding site is contributed by serine 526. Arginine 529 is a binding site for ATP. Residues valine 540, histidine 542, and valine 545 each coordinate Mg(2+). Arginine 587 contributes to the CoA binding site. An N6-acetyllysine modification is found at lysine 613.

It belongs to the ATP-dependent AMP-binding enzyme family. Requires Mg(2+) as cofactor. Post-translationally, acetylated. Deacetylation by the SIR2-homolog deacetylase activates the enzyme.

The catalysed reaction is acetate + ATP + CoA = acetyl-CoA + AMP + diphosphate. In terms of biological role, catalyzes the conversion of acetate into acetyl-CoA (AcCoA), an essential intermediate at the junction of anabolic and catabolic pathways. AcsA undergoes a two-step reaction. In the first half reaction, AcsA combines acetate with ATP to form acetyl-adenylate (AcAMP) intermediate. In the second half reaction, it can then transfer the acetyl group from AcAMP to the sulfhydryl group of CoA, forming the product AcCoA. The sequence is that of Acetyl-coenzyme A synthetase from Marinomonas sp. (strain MWYL1).